The following is a 385-amino-acid chain: tRNA pseudouridine synthase D (385 aa).

Residue aspartate 65 is the Nucleophile of the active site. The 203-residue stretch at glycine 143 to lysine 345 folds into the TRUD domain.

The protein belongs to the pseudouridine synthase TruD family.

The enzyme catalyses uridine(13) in tRNA = pseudouridine(13) in tRNA. Functionally, responsible for synthesis of pseudouridine from uracil-13 in transfer RNAs. This chain is tRNA pseudouridine synthase D, found in Aquifex aeolicus (strain VF5).